The chain runs to 156 residues: Ribosomal RNA large subunit methyltransferase H (156 aa).

S-adenosyl-L-methionine-binding positions include L73, G104, and 123 to 128 (LSALTL).

Belongs to the RNA methyltransferase RlmH family. Homodimer.

It is found in the cytoplasm. It carries out the reaction pseudouridine(1915) in 23S rRNA + S-adenosyl-L-methionine = N(3)-methylpseudouridine(1915) in 23S rRNA + S-adenosyl-L-homocysteine + H(+). Functionally, specifically methylates the pseudouridine at position 1915 (m3Psi1915) in 23S rRNA. The polypeptide is Ribosomal RNA large subunit methyltransferase H (Shewanella pealeana (strain ATCC 700345 / ANG-SQ1)).